A 149-amino-acid polypeptide reads, in one-letter code: Ribosome-binding factor A (149 aa).

Residues 123 to 149 (LAKLREGAAPAGDADPYKTSSKSESEE) are disordered.

Belongs to the RbfA family. As to quaternary structure, monomer. Binds 30S ribosomal subunits, but not 50S ribosomal subunits or 70S ribosomes.

The protein localises to the cytoplasm. One of several proteins that assist in the late maturation steps of the functional core of the 30S ribosomal subunit. Associates with free 30S ribosomal subunits (but not with 30S subunits that are part of 70S ribosomes or polysomes). Required for efficient processing of 16S rRNA. May interact with the 5'-terminal helix region of 16S rRNA. The sequence is that of Ribosome-binding factor A from Corynebacterium glutamicum (strain ATCC 13032 / DSM 20300 / JCM 1318 / BCRC 11384 / CCUG 27702 / LMG 3730 / NBRC 12168 / NCIMB 10025 / NRRL B-2784 / 534).